A 554-amino-acid polypeptide reads, in one-letter code: Glucose-6-phosphate isomerase (554 aa).

Glutamate 359 (proton donor) is an active-site residue. Residues histidine 390 and lysine 518 contribute to the active site.

It belongs to the GPI family.

The protein localises to the cytoplasm. It carries out the reaction alpha-D-glucose 6-phosphate = beta-D-fructose 6-phosphate. It functions in the pathway carbohydrate biosynthesis; gluconeogenesis. Its pathway is carbohydrate degradation; glycolysis; D-glyceraldehyde 3-phosphate and glycerone phosphate from D-glucose: step 2/4. In terms of biological role, catalyzes the reversible isomerization of glucose-6-phosphate to fructose-6-phosphate. The chain is Glucose-6-phosphate isomerase from Pseudomonas putida (strain ATCC 700007 / DSM 6899 / JCM 31910 / BCRC 17059 / LMG 24140 / F1).